The primary structure comprises 129 residues: Gem-associated protein 7 (129 aa).

M1 bears the N-acetylmethionine mark. The SUZ-C domain maps to 1-31 (MQSPLTIPVPVPVLRLPRGPDGFSRGFASDG). The region spanning 63–129 (RYLRSLLAMV…SDIISYSFKL (67 aa)) is the Sm domain.

This sequence belongs to the gemin-7 family. In terms of assembly, part of the core SMN complex that contains SMN1, GEMIN2/SIP1, DDX20/GEMIN3, GEMIN4, GEMIN5, GEMIN6, GEMIN7, GEMIN8 and STRAP/UNRIP. Part of the SMN-Sm complex that contains SMN1, GEMIN2/SIP1, DDX20/GEMIN3, GEMIN4, GEMIN5, GEMIN6, GEMIN7, GEMIN8, STRAP/UNRIP and the Sm proteins SNRPB, SNRPD1, SNRPD2, SNRPD3, SNRPE, SNRPF and SNRPG. Interacts with GEMIN6; the interaction is direct. Interacts with STRAP/UNRIP; the interaction is direct. Interacts with GEMIN8; the interaction is direct. Interacts with SNRPB, SNRPD2, SNRPD3 and SNRPE; the interaction is direct.

Its subcellular location is the nucleus. It is found in the nucleoplasm. The protein resides in the gem. The protein localises to the cytoplasm. Its function is as follows. The SMN complex catalyzes the assembly of small nuclear ribonucleoproteins (snRNPs), the building blocks of the spliceosome, and thereby plays an important role in the splicing of cellular pre-mRNAs. Most spliceosomal snRNPs contain a common set of Sm proteins SNRPB, SNRPD1, SNRPD2, SNRPD3, SNRPE, SNRPF and SNRPG that assemble in a heptameric protein ring on the Sm site of the small nuclear RNA to form the core snRNP (Sm core). In the cytosol, the Sm proteins SNRPD1, SNRPD2, SNRPE, SNRPF and SNRPG are trapped in an inactive 6S pICln-Sm complex by the chaperone CLNS1A that controls the assembly of the core snRNP. To assemble core snRNPs, the SMN complex accepts the trapped 5Sm proteins from CLNS1A forming an intermediate. Binding of snRNA inside 5Sm triggers eviction of the SMN complex, thereby allowing binding of SNRPD3 and SNRPB to complete assembly of the core snRNP. The protein is Gem-associated protein 7 (Gemin7) of Mus musculus (Mouse).